A 230-amino-acid chain; its full sequence is MGQQISSQTQTVMNKLPEKVAKHASLVQESGFLTYEEFLGRVAELNDVTAKLASGQEKHLLFEVQPGSDSSAFWKVVVRIICTKINKTSGIVEASRILNLYQFVQLYKDITSQAAGVLAQSETSEEAAESLTSVSSSQASLWMGRLKQPTDEDECCICMDGRVDLILPCAHSFCQKCIDKWSDRHRSCPVCRRQVTGAGDSWVVSDAPTEDDIATYILNMVDEVGQPLRP.

The RING-type zinc finger occupies 154–191; the sequence is ECCICMDGRVDLILPCAHSFCQKCIDKWSDRHRSCPVC.

The protein is RING finger protein 141 (RNF141) of Gallus gallus (Chicken).